Consider the following 447-residue polypeptide: Glutamyl-tRNA reductase (447 aa).

Residues 45 to 48, Ser111, 116 to 118, and Gln122 each bind substrate; these read TCNR and ETE. Cys46 functions as the Nucleophile in the catalytic mechanism. 191–196 serves as a coordination point for NADP(+); that stretch reads GTGKYA.

Belongs to the glutamyl-tRNA reductase family. Homodimer.

The enzyme catalyses (S)-4-amino-5-oxopentanoate + tRNA(Glu) + NADP(+) = L-glutamyl-tRNA(Glu) + NADPH + H(+). It functions in the pathway porphyrin-containing compound metabolism; protoporphyrin-IX biosynthesis; 5-aminolevulinate from L-glutamyl-tRNA(Glu): step 1/2. Its function is as follows. Catalyzes the NADPH-dependent reduction of glutamyl-tRNA(Glu) to glutamate 1-semialdehyde (GSA). The protein is Glutamyl-tRNA reductase of Tropheryma whipplei (strain Twist) (Whipple's bacillus).